The primary structure comprises 361 residues: Protein TIFY 8 (361 aa).

4 disordered regions span residues 53-78 (NKAAKAAMTPSTASASSAGGLGGLSS), 113-134 (RFSGNKRSNSDSHFTTQEHPET), 190-232 (QTAA…RKDL), and 268-361 (SGGS…KEAT). Residues 56–78 (AKAAMTPSTASASSAGGLGGLSS) show a composition bias toward low complexity. Polar residues-rich tracts occupy residues 113–127 (RFSGNKRSNSDSHFT) and 208–232 (SSFTMPNSSKLESFAPSNTGNRKDL). The Tify domain occupies 232 to 267 (LASSTKQMTIFYGGQAHVFDDVHPNKADVIMALAGS). Basic and acidic residues predominate over residues 333 to 361 (GREHQGSIISRGRDIRDPVHRSDPEKEAT).

This sequence belongs to the TIFY/JAZ family. Interacts with AFPH2/NINJA. In terms of processing, ubiquitinated. Targeted for degradation by the SCF(COI1) E3 ubiquitin ligase-proteasome pathway during jasmonate signaling.

Its subcellular location is the nucleus. Functionally, repressor of jasmonate responses. This is Protein TIFY 8 from Arabidopsis thaliana (Mouse-ear cress).